The primary structure comprises 591 residues: Potassium-transporting ATPase potassium-binding subunit (591 aa).

10 consecutive transmembrane segments (helical) span residues 6 to 26 (WFQILLFLGLILAVTKPLGVF), 63 to 83 (WTEYAIAMLLFSAVSMLMLYI), 137 to 157 (GLAYHNFMSAAVGIAIAIAFI), 179 to 199 (VLWVLLPFCIMGALALVSQGV), 272 to 292 (LSNLIEMFSIFAISAGLTYTL), 303 to 323 (WAVWGAMAALFLVGVSVVYWA), 405 to 425 (AGMYGMLIYIVLAVFIAGLMV), 444 to 464 (AMLVALIFPLIILVFSAISSV), 510 to 530 (VAIGIAMLGGRFLMIIPMLAI), and 553 to 573 (LFSVLLIGTIIIIGALTFFPA).

It belongs to the KdpA family. The system is composed of three essential subunits: KdpA, KdpB and KdpC.

It localises to the cell inner membrane. Functionally, part of the high-affinity ATP-driven potassium transport (or Kdp) system, which catalyzes the hydrolysis of ATP coupled with the electrogenic transport of potassium into the cytoplasm. This subunit binds the periplasmic potassium ions and delivers the ions to the membrane domain of KdpB through an intramembrane tunnel. This chain is Potassium-transporting ATPase potassium-binding subunit, found in Koribacter versatilis (strain Ellin345).